The following is a 407-amino-acid chain: Imidazolonepropionase (407 aa).

Positions 68 and 70 each coordinate Fe(3+). Zn(2+) is bound by residues His68 and His70. Residues Arg77, Tyr140, and His173 each contribute to the 4-imidazolone-5-propanoate site. Tyr140 lines the N-formimidoyl-L-glutamate pocket. His238 serves as a coordination point for Fe(3+). Residue His238 participates in Zn(2+) binding. Gln241 contributes to the 4-imidazolone-5-propanoate binding site. Residue Asp313 participates in Fe(3+) binding. Position 313 (Asp313) interacts with Zn(2+). Positions 315 and 317 each coordinate N-formimidoyl-L-glutamate. Thr318 contributes to the 4-imidazolone-5-propanoate binding site.

It belongs to the metallo-dependent hydrolases superfamily. HutI family. The cofactor is Zn(2+). Fe(3+) is required as a cofactor.

It is found in the cytoplasm. The enzyme catalyses 4-imidazolone-5-propanoate + H2O = N-formimidoyl-L-glutamate. It functions in the pathway amino-acid degradation; L-histidine degradation into L-glutamate; N-formimidoyl-L-glutamate from L-histidine: step 3/3. Its function is as follows. Catalyzes the hydrolytic cleavage of the carbon-nitrogen bond in imidazolone-5-propanoate to yield N-formimidoyl-L-glutamate. It is the third step in the universal histidine degradation pathway. This Burkholderia orbicola (strain MC0-3) protein is Imidazolonepropionase.